We begin with the raw amino-acid sequence, 263 residues long: 3-methyl-2-oxobutanoate hydroxymethyltransferase (263 aa).

The Mg(2+) site is built by Asp45 and Asp84. Residues 45–46 (DS), Asp84, and Lys112 contribute to the 3-methyl-2-oxobutanoate site. A Mg(2+)-binding site is contributed by Glu114. Glu180 acts as the Proton acceptor in catalysis.

This sequence belongs to the PanB family. Homodecamer; pentamer of dimers. Requires Mg(2+) as cofactor.

The protein resides in the cytoplasm. The enzyme catalyses 3-methyl-2-oxobutanoate + (6R)-5,10-methylene-5,6,7,8-tetrahydrofolate + H2O = 2-dehydropantoate + (6S)-5,6,7,8-tetrahydrofolate. The protein operates within cofactor biosynthesis; (R)-pantothenate biosynthesis; (R)-pantoate from 3-methyl-2-oxobutanoate: step 1/2. Its function is as follows. Catalyzes the reversible reaction in which hydroxymethyl group from 5,10-methylenetetrahydrofolate is transferred onto alpha-ketoisovalerate to form ketopantoate. The polypeptide is 3-methyl-2-oxobutanoate hydroxymethyltransferase (Enterobacter sp. (strain 638)).